The chain runs to 33 residues: Brevinin-2 (33 aa).

An intrachain disulfide couples Cys27 to Cys33.

It belongs to the frog skin active peptide (FSAP) family. Brevinin subfamily. Expressed by the skin glands.

It is found in the secreted. Shows antibacterial activity against representative Gram-negative and Gram-positive bacterial species, and a very high hemolytic activity. The chain is Brevinin-2 from Pelophylax porosus brevipodus (Nagoya Daruma pond frog).